Consider the following 375-residue polypeptide: All-trans-retinol dehydrogenase [NAD(+)] ADH1B (375 aa).

Ser-2 carries the post-translational modification N-acetylserine. Ser-23 carries the phosphoserine modification. Tyr-35 carries the post-translational modification Phosphotyrosine. Zn(2+) contacts are provided by Cys-47, His-68, Cys-98, Cys-101, Cys-104, Cys-112, and Cys-175. NAD(+)-binding positions include Gly-200–Gly-205, Asp-224, Lys-229, Val-293–Val-295, and Arg-370.

The protein belongs to the zinc-containing alcohol dehydrogenase family. Homodimer or heterodimer of closely related subunits. Requires Zn(2+) as cofactor. Expressed in liver.

The protein resides in the cytoplasm. The catalysed reaction is all-trans-retinol + NAD(+) = all-trans-retinal + NADH + H(+). The enzyme catalyses all-trans-4-hydroxyretinol + NAD(+) = all-trans-4-hydroxyretinal + NADH + H(+). It carries out the reaction all-trans-4-oxoretinol + NAD(+) = all-trans-4-oxoretinal + NADH + H(+). Its function is as follows. Catalyzes the NAD-dependent oxidation of all-trans-retinol and its derivatives such as all-trans-4-hydroxyretinol and may participate in retinoid metabolism. In vitro can also catalyze the NADH-dependent reduction of all-trans-retinal and its derivatives such as all-trans-4-oxoretinal. Catalyzes in the oxidative direction with higher efficiency. Has the same affinity for all-trans-4-hydroxyretinol and all-trans-4-oxoretinal. The polypeptide is All-trans-retinol dehydrogenase [NAD(+)] ADH1B (Papio hamadryas (Hamadryas baboon)).